Consider the following 1215-residue polypeptide: Reverse gyrase 2 (1215 aa).

An RG N-terminal-type zinc finger spans residues 3–44; sequence GGVNAVYMGLCYNCGGNIDEDRLEKGLPCARCLPSPPRRATP. The Zn(2+) site is built by Cys-13, Cys-16, Cys-31, and Cys-34. Residues Gln-89 and 106-113 each bind ATP; that span reads APTGVGKS. A Helicase ATP-binding domain is found at 93 to 249; that stretch reads AKRLVKGDSF…SLVKARLKLY (157 aa). A DEAD box motif is present at residues 209 to 212; sequence DDVD. The tract at residues 614 to 1215 is topoisomerase I; it reads VRVKTTLLVV…TGDVMGQSEA (602 aa). Residues 618 to 783 form the Toprim domain; the sequence is TTLLVVESPT…NVRRGRFHEV (166 aa). Residue Glu-624 participates in Mg(2+) binding. An RG C-terminal-type zinc finger spans residues 702–729; it reads IKRCLDCGAQHTSSSPFCPRCGSPRQVD. Zn(2+) contacts are provided by Cys-705, Cys-708, Cys-719, and Cys-722. Mg(2+) is bound at residue Asp-752. The Topo IA-type catalytic domain maps to 799-1200; that stretch reads EKSLIEAQKV…SVWRMVDEAV (402 aa). Tyr-943 functions as the O-(5'-phospho-DNA)-tyrosine intermediate in the catalytic mechanism.

In the N-terminal section; belongs to the DEAD box helicase family. DDVD subfamily. The protein in the C-terminal section; belongs to the type IA topoisomerase family. In terms of assembly, monomer. The cofactor is Zn(2+). Mg(2+) is required as a cofactor.

The protein resides in the cytoplasm. It catalyses the reaction ATP + H2O = ADP + phosphate + H(+). Functionally, modifies the topological state of DNA by introducing positive supercoils in an ATP-dependent process, increasing the linking number in steps of +1. Binds to single-stranded DNA, transiently cleaves and then rejoins the ends, introducing a positive supercoil in the process. The scissile phosphodiester is attacked by the catalytic tyrosine of the enzyme, resulting in the formation of a DNA-(5'-phosphotyrosyl)-enzyme intermediate. Probably involved in rewinding DNA strands in regions of the chromosome that have opened up to allow replication, transcription, DNA repair and/or for DNA protection. In Aeropyrum pernix (strain ATCC 700893 / DSM 11879 / JCM 9820 / NBRC 100138 / K1), this protein is Reverse gyrase 2.